Here is a 364-residue protein sequence, read N- to C-terminus: Ribosomal RNA large subunit methyltransferase F (364 aa).

Low complexity predominate over residues 1–17; that stretch reads MPKPAIKTAAKPATSSA. A disordered region spans residues 1–53; it reads MPKPAIKTAAKPATSSAGKRGKPNTPKSVAKPKTAKPKTASKPKVKPGEKKRL. Residues 33–53 are compositionally biased toward basic residues; sequence KTAKPKTASKPKVKPGEKKRL.

It belongs to the methyltransferase superfamily. METTL16/RlmF family.

Its subcellular location is the cytoplasm. The enzyme catalyses adenosine(1618) in 23S rRNA + S-adenosyl-L-methionine = N(6)-methyladenosine(1618) in 23S rRNA + S-adenosyl-L-homocysteine + H(+). In terms of biological role, specifically methylates the adenine in position 1618 of 23S rRNA. The protein is Ribosomal RNA large subunit methyltransferase F of Shewanella sp. (strain MR-7).